Reading from the N-terminus, the 367-residue chain is Peptide chain release factor 2 (367 aa).

Q250 is subject to N5-methylglutamine.

The protein belongs to the prokaryotic/mitochondrial release factor family. Post-translationally, methylated by PrmC. Methylation increases the termination efficiency of RF2.

The protein localises to the cytoplasm. Functionally, peptide chain release factor 2 directs the termination of translation in response to the peptide chain termination codons UGA and UAA. The chain is Peptide chain release factor 2 from Mycobacteroides abscessus (strain ATCC 19977 / DSM 44196 / CCUG 20993 / CIP 104536 / JCM 13569 / NCTC 13031 / TMC 1543 / L948) (Mycobacterium abscessus).